The primary structure comprises 98 residues: Conotoxin Di19A (98 aa).

Positions 1–19 are cleaved as a signal peptide; the sequence is MSTLGILLPIALLLPLANP. Residues 20-49 constitute a propeptide that is removed on maturation; the sequence is AENGDGQAMPRTRNLRSLSFGRTLRRLEKR. Pro-53 carries the post-translational modification 4-hydroxyproline. The residue at position 63 (Glu-63) is a 4-carboxyglutamate. 4-hydroxyproline occurs at positions 68, 93, and 97.

Contains 5 disulfide bonds. In terms of tissue distribution, expressed by the venom duct.

It localises to the secreted. Its function is as follows. Injection of the synthetic peptide causes a hyperexcitable phenotype in mice greater than three weeks of age at lower doses, and lethargy at higher doses. The protein is Conotoxin Di19A of Conus distans (Distant cone).